Reading from the N-terminus, the 175-residue chain is ATP synthase subunit delta (175 aa).

This sequence belongs to the ATPase delta chain family. As to quaternary structure, F-type ATPases have 2 components, F(1) - the catalytic core - and F(0) - the membrane proton channel. F(1) has five subunits: alpha(3), beta(3), gamma(1), delta(1), epsilon(1). F(0) has three main subunits: a(1), b(2) and c(10-14). The alpha and beta chains form an alternating ring which encloses part of the gamma chain. F(1) is attached to F(0) by a central stalk formed by the gamma and epsilon chains, while a peripheral stalk is formed by the delta and b chains.

Its subcellular location is the cell inner membrane. F(1)F(0) ATP synthase produces ATP from ADP in the presence of a proton or sodium gradient. F-type ATPases consist of two structural domains, F(1) containing the extramembraneous catalytic core and F(0) containing the membrane proton channel, linked together by a central stalk and a peripheral stalk. During catalysis, ATP synthesis in the catalytic domain of F(1) is coupled via a rotary mechanism of the central stalk subunits to proton translocation. In terms of biological role, this protein is part of the stalk that links CF(0) to CF(1). It either transmits conformational changes from CF(0) to CF(1) or is implicated in proton conduction. This chain is ATP synthase subunit delta, found in Xylella fastidiosa (strain M23).